Reading from the N-terminus, the 226-residue chain is ATP synthase subunit a (226 aa).

Transmembrane regions (helical) follow at residues 18-38 (FITG…SLGA), 76-96 (YFPL…IGII), 105-125 (SWSF…FEGI), 134-154 (FAHF…IEII), 179-199 (LIML…VLFF), and 201-221 (GILQ…GAVL).

This sequence belongs to the ATPase A chain family. In terms of assembly, F-type ATPases have 2 components, CF(1) - the catalytic core - and CF(0) - the membrane proton channel. CF(1) has five subunits: alpha(3), beta(3), gamma(1), delta(1), epsilon(1). CF(0) has three main subunits: a(1), b(2) and c(9-12). The alpha and beta chains form an alternating ring which encloses part of the gamma chain. CF(1) is attached to CF(0) by a central stalk formed by the gamma and epsilon chains, while a peripheral stalk is formed by the delta and b chains.

It is found in the cell inner membrane. Its function is as follows. Key component of the proton channel; it plays a direct role in the translocation of protons across the membrane. This is ATP synthase subunit a from Helicobacter acinonychis (strain Sheeba).